Reading from the N-terminus, the 101-residue chain is uncharacterized protein (101 aa).

3 consecutive transmembrane segments (helical) span residues 20–40 (KHFI…LLGL), 59–79 (GVIA…MYIA), and 81–101 (SEMW…ALFF).

The protein resides in the endoplasmic reticulum. The protein localises to the membrane. This is an uncharacterized protein from Saccharomyces cerevisiae (strain ATCC 204508 / S288c) (Baker's yeast).